The primary structure comprises 820 residues: Phosphoenolpyruvate synthase (820 aa).

The active-site Tele-phosphohistidine intermediate is histidine 438. 7 residues coordinate substrate: arginine 539, arginine 587, glutamate 689, glycine 710, serine 711, asparagine 712, and aspartate 713. Glutamate 689 lines the Mg(2+) pocket. Mg(2+) is bound at residue aspartate 713. The active-site Proton donor is the cysteine 762.

This sequence belongs to the PEP-utilizing enzyme family. Mg(2+) serves as cofactor.

The catalysed reaction is pyruvate + ATP + H2O = phosphoenolpyruvate + AMP + phosphate + 2 H(+). The protein operates within carbohydrate biosynthesis; gluconeogenesis. Its function is as follows. Catalyzes the phosphorylation of pyruvate to phosphoenolpyruvate. This Aeropyrum pernix (strain ATCC 700893 / DSM 11879 / JCM 9820 / NBRC 100138 / K1) protein is Phosphoenolpyruvate synthase (ppsA).